Reading from the N-terminus, the 329-residue chain is Homeobox protein Nkx-3.2 (329 aa).

The segment at 107-188 (GLGSPCGGAP…PDPSPPDEDP (82 aa)) is disordered. Over residues 110–124 (SPCGGAPGAGAGGEP) the composition is skewed to gly residues. A compositionally biased stretch (basic and acidic residues) spans 138 to 160 (ELGRPGDIGERKKQRPLEARAKG). Residues 202–261 (KKRSRAAFSHAQVFELERRFNHQRYLSGPERADLAASLKLTETQVKIWFQNRRYKTKRRQ) constitute a DNA-binding region (homeobox).

The protein belongs to the NK-3 homeobox family. First expressed in developing facial cartilage in early tailbud embryos, with expression localized to the basihyobranchial, palatoquadrate and possibly Meckel's cartilages. Shortly after, a second area of expression is seen in the musculature of the anterior gut. During late embryogenesis, gut expression extends into hindgut tissues. In adults, expressed at a high level in the kidney, pancreas, spleen and stomach and at a slightly lower level in the intestine, skeletal muscle and tongue. Adult heart, liver and lung show little or no expression.

Its subcellular location is the nucleus. This chain is Homeobox protein Nkx-3.2 (nkx3-2), found in Xenopus laevis (African clawed frog).